The following is a 298-amino-acid chain: tRNA pseudouridine synthase-like 1 (298 aa).

Asp-60 acts as the Nucleophile in catalysis. Tyr-124 contacts substrate.

It belongs to the tRNA pseudouridine synthase TruA family.

The catalysed reaction is a uridine in tRNA = a pseudouridine in tRNA. This Xenopus laevis (African clawed frog) protein is tRNA pseudouridine synthase-like 1 (pusl1).